The sequence spans 349 residues: Anthranilate phosphoribosyltransferase (349 aa).

Residues Gly-82, 85-86 (GD), 92-95 (NVST), 110-118 (KHGNRGVSS), and Ser-122 each bind 5-phospho-alpha-D-ribose 1-diphosphate. Gly-82 contributes to the anthranilate binding site. Ser-94 lines the Mg(2+) pocket. Anthranilate is bound at residue Asn-113. Arg-168 contacts anthranilate. 2 residues coordinate Mg(2+): Asp-227 and Glu-228.

Belongs to the anthranilate phosphoribosyltransferase family. As to quaternary structure, homodimer. The cofactor is Mg(2+).

The catalysed reaction is N-(5-phospho-beta-D-ribosyl)anthranilate + diphosphate = 5-phospho-alpha-D-ribose 1-diphosphate + anthranilate. The protein operates within amino-acid biosynthesis; L-tryptophan biosynthesis; L-tryptophan from chorismate: step 2/5. In terms of biological role, catalyzes the transfer of the phosphoribosyl group of 5-phosphorylribose-1-pyrophosphate (PRPP) to anthranilate to yield N-(5'-phosphoribosyl)-anthranilate (PRA). The polypeptide is Anthranilate phosphoribosyltransferase (Acinetobacter baumannii (strain SDF)).